We begin with the raw amino-acid sequence, 517 residues long: ATP synthase subunit alpha 1 (517 aa).

ATP is bound at residue 174-181 (GDRQTGKT).

It belongs to the ATPase alpha/beta chains family. As to quaternary structure, F-type ATPases have 2 components, CF(1) - the catalytic core - and CF(0) - the membrane proton channel. CF(1) has five subunits: alpha(3), beta(3), gamma(1), delta(1), epsilon(1). CF(0) has three main subunits: a(1), b(2) and c(9-12). The alpha and beta chains form an alternating ring which encloses part of the gamma chain. CF(1) is attached to CF(0) by a central stalk formed by the gamma and epsilon chains, while a peripheral stalk is formed by the delta and b chains.

The protein resides in the cell inner membrane. The catalysed reaction is ATP + H2O + 4 H(+)(in) = ADP + phosphate + 5 H(+)(out). In terms of biological role, produces ATP from ADP in the presence of a proton gradient across the membrane. The alpha chain is a regulatory subunit. This is ATP synthase subunit alpha 1 from Polaromonas naphthalenivorans (strain CJ2).